Consider the following 323-residue polypeptide: tRNA-cytidine(32) 2-sulfurtransferase (323 aa).

The PP-loop motif signature appears at 49-54 (SGGKDS). The [4Fe-4S] cluster site is built by Cys124, Cys127, and Cys215.

This sequence belongs to the TtcA family. As to quaternary structure, homodimer. Mg(2+) serves as cofactor. Requires [4Fe-4S] cluster as cofactor.

It localises to the cytoplasm. It carries out the reaction cytidine(32) in tRNA + S-sulfanyl-L-cysteinyl-[cysteine desulfurase] + AH2 + ATP = 2-thiocytidine(32) in tRNA + L-cysteinyl-[cysteine desulfurase] + A + AMP + diphosphate + H(+). Its pathway is tRNA modification. Functionally, catalyzes the ATP-dependent 2-thiolation of cytidine in position 32 of tRNA, to form 2-thiocytidine (s(2)C32). The sulfur atoms are provided by the cysteine/cysteine desulfurase (IscS) system. The protein is tRNA-cytidine(32) 2-sulfurtransferase of Shewanella denitrificans (strain OS217 / ATCC BAA-1090 / DSM 15013).